The sequence spans 235 residues: Segregation and condensation protein A (235 aa).

It belongs to the ScpA family. In terms of assembly, component of a cohesin-like complex composed of ScpA, ScpB and the Smc homodimer, in which ScpA and ScpB bind to the head domain of Smc. The presence of the three proteins is required for the association of the complex with DNA.

It is found in the cytoplasm. Participates in chromosomal partition during cell division. May act via the formation of a condensin-like complex containing Smc and ScpB that pull DNA away from mid-cell into both cell halves. The polypeptide is Segregation and condensation protein A (Streptococcus mutans serotype c (strain ATCC 700610 / UA159)).